A 64-amino-acid polypeptide reads, in one-letter code: Toxin Tce3 (64 aa).

One can recognise an LCN-type CS-alpha/beta domain in the interval 1-62 (KDGYIIEHRG…IFDSNNNKCS (62 aa)). 4 disulfide bridges follow: Cys11–Cys61, Cys15–Cys37, Cys23–Cys42, and Cys27–Cys44.

Belongs to the long (4 C-C) scorpion toxin superfamily. Sodium channel inhibitor family. Beta subfamily. As to expression, expressed by the venom gland.

It localises to the secreted. Functionally, inhibits the sodium (Nav) currents in an apparent irreversible manner. Produces small depolarization and induces repetitive firing in squid axons. Is specific for arthropods (crickets, triatomides, crabs and squids), but is non-toxic to mice. Shows antibacterial activity against both Gram-positive and Gram-negative bacteria. This is Toxin Tce3 from Tityus cerroazul (Scorpion).